We begin with the raw amino-acid sequence, 236 residues long: DNA repair protein RecO (236 aa).

This sequence belongs to the RecO family.

Involved in DNA repair and RecF pathway recombination. The polypeptide is DNA repair protein RecO (Haemophilus influenzae (strain PittGG)).